Reading from the N-terminus, the 407-residue chain is POC1 centriolar protein homolog A (407 aa).

7 WD repeats span residues 17–56, 59–98, 101–140, 143–182, 185–224, 227–266, and 269–308; these read GHRDAVTSVDFSLNTKQLASGSMDSCLMVWHMKPQTRAYR, GHKDAVTCVNFSPSGHLLASGSRDKTVRIWVPNVKGESTV, AHTATVRSVHFCSDGQSFVTASDDKTVKVWSTHRQKFLFS, QHINWVRCAKFSPDGRLIVSASDDKTVKLWDKTSRECVHS, EHGGFVTYVDFHPSGTCIAAAGMDNTVKVWDVRTHRLLQH, LHSAAVNALSFHPSGNYLVTASSDSTLKILDLMEGRLLYT, and GHQGPATTVAFSRTGEYFASGGSDEQVMVWKSNFDIVDYG. Positions 317–357 are disordered; that stretch reads PATRASSSGTLPEVDPLVPPGRGRSQESMQSHSQEPVSVPQ. Positions 342-357 are enriched in polar residues; that stretch reads QESMQSHSQEPVSVPQ. Residues 369–397 are a coiled coil; the sequence is QLDVLTQTVSILEQRLTLTEDKLKQCLEN.

It belongs to the WD repeat POC1 family. Interacts with POC1B.

The protein resides in the cytoplasm. It is found in the cytoskeleton. Its subcellular location is the microtubule organizing center. The protein localises to the centrosome. It localises to the centriole. The protein resides in the cilium basal body. It is found in the spindle pole. Plays an important role in centriole assembly and/or stability and ciliogenesis. Involved in early steps of centriole duplication, as well as in the later steps of centriole length control. Acts in concert with POC1B to ensure centriole integrity and proper mitotic spindle formation. The sequence is that of POC1 centriolar protein homolog A (POC1A) from Bos taurus (Bovine).